Here is a 493-residue protein sequence, read N- to C-terminus: Glutamyl-tRNA(Gln) amidotransferase subunit A (493 aa).

Active-site charge relay system residues include Lys79 and Ser159. The active-site Acyl-ester intermediate is Ser183.

The protein belongs to the amidase family. GatA subfamily. In terms of assembly, heterotrimer of A, B and C subunits.

It catalyses the reaction L-glutamyl-tRNA(Gln) + L-glutamine + ATP + H2O = L-glutaminyl-tRNA(Gln) + L-glutamate + ADP + phosphate + H(+). Allows the formation of correctly charged Gln-tRNA(Gln) through the transamidation of misacylated Glu-tRNA(Gln) in organisms which lack glutaminyl-tRNA synthetase. The reaction takes place in the presence of glutamine and ATP through an activated gamma-phospho-Glu-tRNA(Gln). The chain is Glutamyl-tRNA(Gln) amidotransferase subunit A from Sinorhizobium fredii (strain NBRC 101917 / NGR234).